A 275-amino-acid polypeptide reads, in one-letter code: Large ribosomal subunit protein uL2 (275 aa).

The interval 208-275 is disordered; sequence AGAKRWRGRR…NMIIRDRRKK (68 aa). 2 stretches are compositionally biased toward basic residues: residues 209-219 and 254-263; these read GAKRWRGRRPT and KGYKTRRNKR.

It belongs to the universal ribosomal protein uL2 family. Part of the 50S ribosomal subunit. Forms a bridge to the 30S subunit in the 70S ribosome.

One of the primary rRNA binding proteins. Required for association of the 30S and 50S subunits to form the 70S ribosome, for tRNA binding and peptide bond formation. It has been suggested to have peptidyltransferase activity; this is somewhat controversial. Makes several contacts with the 16S rRNA in the 70S ribosome. In Coxiella burnetii (strain CbuK_Q154) (Coxiella burnetii (strain Q154)), this protein is Large ribosomal subunit protein uL2.